A 514-amino-acid chain; its full sequence is 2-isopropylmalate synthase (514 aa).

Residues L5 to V268 form the Pyruvate carboxyltransferase domain. Residues D14, H202, H204, and N239 each coordinate Mn(2+). Residues K395–S514 form a regulatory domain region.

The protein belongs to the alpha-IPM synthase/homocitrate synthase family. LeuA type 1 subfamily. As to quaternary structure, homodimer. Requires Mn(2+) as cofactor.

The protein localises to the cytoplasm. It catalyses the reaction 3-methyl-2-oxobutanoate + acetyl-CoA + H2O = (2S)-2-isopropylmalate + CoA + H(+). It participates in amino-acid biosynthesis; L-leucine biosynthesis; L-leucine from 3-methyl-2-oxobutanoate: step 1/4. Its function is as follows. Catalyzes the condensation of the acetyl group of acetyl-CoA with 3-methyl-2-oxobutanoate (2-ketoisovalerate) to form 3-carboxy-3-hydroxy-4-methylpentanoate (2-isopropylmalate). The sequence is that of 2-isopropylmalate synthase from Burkholderia multivorans (strain ATCC 17616 / 249).